The sequence spans 136 residues: Immunoglobulin J chain (136 aa).

Disulfide bonds link C12-C100, C71-C91, and C108-C133. N48 carries an N-linked (GlcNAc...) (complex) asparagine glycan.

In terms of assembly, part of the secretory IgA (sIgA) complex that consists of two, four or five IgA monomers, and two additional non-Ig polypeptides, namely the JCHAIN and the secretory component (the proteolytic product of PIGR). Part of the secretory IgM (sIgM) complex that consist of five IgM monomers, and two additional non-Ig polypeptides, namely the JCHAIN and the secretory component (the proteolytic product of PIGR). JCHAIN-containing IgM interacts (via CH4 domain) with FCRM (via Ig-like domain).

It localises to the secreted. Its function is as follows. Serves to link two monomer units of either IgM or IgA. In the case of IgM, the J chain-joined dimer is a nucleating unit for the IgM pentamer, and in the case of IgA it induces dimers and/or larger polymers. It also helps to bind these immunoglobulins to secretory component. This is Immunoglobulin J chain from Oryctolagus cuniculus (Rabbit).